The sequence spans 336 residues: MTTIDPRSELVDGRRRAGARVDAVGAAALLSAAARVGVVCHVHPDADTIGAGLALALVLDGCGKRVEVSFAAPATLPESLRSLPGCHLLVRPEVMRRDVDLVVTVDIPSVDRLGALGDLTDSGRELLVIDHHASNDLFGTANFIDPSADSTTTMVAEILDAWGKPIDPRVAHCIYAGLATDTGSFRWASVRGYRLAARLVEIGVDNATVSRTLMDSHPFTWLPLLSRVLGSAQLVSEAVGGRGLVYVVVDNREWVAARSEEVESIVDIVRTTQQAEVAAVFKEVEPHRWSVSMRAKTVNLAAVASGFGGGGHRLAAGYTTTGSIDDAVASLRAALG.

This sequence belongs to the NrnA oligoribonuclease family. Mn(2+) serves as cofactor.

It carries out the reaction adenosine 3',5'-bisphosphate + H2O = AMP + phosphate. Functionally, bifunctional enzyme which has both oligoribonuclease and pAp-phosphatase activities. Degrades RNA oligonucleotides with a length of 5 nucleotides and shorter, with a preference for 2-mers. Also degrades 24-mers. Converts 3'(2')-phosphoadenosine 5'-phosphate (PAP) to AMP. The protein is Bifunctional oligoribonuclease and PAP phosphatase NrnA (nrnA) of Mycobacterium tuberculosis (strain ATCC 25618 / H37Rv).